The sequence spans 205 residues: Thiamine-phosphate synthase (205 aa).

4-amino-2-methyl-5-(diphosphooxymethyl)pyrimidine contacts are provided by residues 37-41 and Asn-69; that span reads QVREK. The Mg(2+) site is built by Asp-70 and Asp-89. Ser-108 contacts 4-amino-2-methyl-5-(diphosphooxymethyl)pyrimidine. 134–136 lines the 2-[(2R,5Z)-2-carboxy-4-methylthiazol-5(2H)-ylidene]ethyl phosphate pocket; that stretch reads TGS. Lys-137 contacts 4-amino-2-methyl-5-(diphosphooxymethyl)pyrimidine. Residues Gly-165 and 185–186 contribute to the 2-[(2R,5Z)-2-carboxy-4-methylthiazol-5(2H)-ylidene]ethyl phosphate site; that span reads IS.

It belongs to the thiamine-phosphate synthase family. It depends on Mg(2+) as a cofactor.

The enzyme catalyses 2-[(2R,5Z)-2-carboxy-4-methylthiazol-5(2H)-ylidene]ethyl phosphate + 4-amino-2-methyl-5-(diphosphooxymethyl)pyrimidine + 2 H(+) = thiamine phosphate + CO2 + diphosphate. It catalyses the reaction 2-(2-carboxy-4-methylthiazol-5-yl)ethyl phosphate + 4-amino-2-methyl-5-(diphosphooxymethyl)pyrimidine + 2 H(+) = thiamine phosphate + CO2 + diphosphate. It carries out the reaction 4-methyl-5-(2-phosphooxyethyl)-thiazole + 4-amino-2-methyl-5-(diphosphooxymethyl)pyrimidine + H(+) = thiamine phosphate + diphosphate. Its pathway is cofactor biosynthesis; thiamine diphosphate biosynthesis; thiamine phosphate from 4-amino-2-methyl-5-diphosphomethylpyrimidine and 4-methyl-5-(2-phosphoethyl)-thiazole: step 1/1. Functionally, condenses 4-methyl-5-(beta-hydroxyethyl)thiazole monophosphate (THZ-P) and 2-methyl-4-amino-5-hydroxymethyl pyrimidine pyrophosphate (HMP-PP) to form thiamine monophosphate (TMP). The protein is Thiamine-phosphate synthase of Clostridium botulinum (strain ATCC 19397 / Type A).